The chain runs to 421 residues: Early growth response protein 2 (421 aa).

Over residues 127–145 (CSSTSSSNASSGSPNLSCS) the composition is skewed to low complexity. 3 disordered regions span residues 127-152 (CSST…PQSD), 179-200 (SPTA…ASDG), and 223-288 (SDRK…ERPY). Residues 236 to 247 (PLSTIRNFTLGG) show a composition bias toward polar residues. 3 consecutive C2H2-type zinc fingers follow at residues 288–312 (YPCP…IRIH), 318–340 (FQCR…IRTH), and 346–368 (FACD…TKIH).

The protein belongs to the EGR C2H2-type zinc-finger protein family.

The protein resides in the nucleus. Sequence-specific DNA-binding transcription factor. This is Early growth response protein 2 (egr2) from Xenopus laevis (African clawed frog).